Consider the following 154-residue polypeptide: Large ribosomal subunit protein uL22c (154 aa).

The protein belongs to the universal ribosomal protein uL22 family. As to quaternary structure, part of the 50S ribosomal subunit.

Its subcellular location is the plastid. The protein resides in the chloroplast. This protein binds specifically to 23S rRNA. Its function is as follows. The globular domain of the protein is located near the polypeptide exit tunnel on the outside of the subunit, while an extended beta-hairpin is found that lines the wall of the exit tunnel in the center of the 70S ribosome. The chain is Large ribosomal subunit protein uL22c (rpl22) from Platanus occidentalis (Sycamore).